A 269-amino-acid chain; its full sequence is 5'-nucleotidase SurE (269 aa).

A divalent metal cation contacts are provided by Asp-11, Asp-12, Ser-42, and Asn-90.

It belongs to the SurE nucleotidase family. It depends on a divalent metal cation as a cofactor.

It is found in the cytoplasm. The catalysed reaction is a ribonucleoside 5'-phosphate + H2O = a ribonucleoside + phosphate. In terms of biological role, nucleotidase that shows phosphatase activity on nucleoside 5'-monophosphates. The protein is 5'-nucleotidase SurE of Haloarcula marismortui (strain ATCC 43049 / DSM 3752 / JCM 8966 / VKM B-1809) (Halobacterium marismortui).